Reading from the N-terminus, the 499-residue chain is IFTAFSLLFSLFIFLLTRKPKSKTPNLPPGPPGWPIVGNLFQVAGSGKQFFEYIRDLKPKYGSIFTLKMGSRTMIIVASAELAHEALIQKGQIFASRPRENPTRTIFSCNKFSVNAAVYGPVWRSLRRNMVQNMLSPSRLKEFREFREIAMDKLIERIRVDAKENNDVVWALKNARFAVFYILVAMCFGVEMDNEEMIERVDQMMKDVLIVLDPRIDDFLPILRLFVGYKQRKRVNEVRKRQIETLVPLIEKRRSVVQNPGSDKTAASFSYLDTLFDVKVEGRKSGPTNAELVTLCSEFLNGGTDTTATALEWGIGRLMENPTIQNQLYQEIKTIVGDKKVDENDIEKMPYLNAVVKELLRKHPPTYFTLTHSVTEPVKLAGYDIPMDTNVEFFVHGISHDPNVWSDPEKFDPDRFLSGREDADITGVKEVKMMPFGVGRRICPGLGMATVHVNLMLARMVQEFEWFAYPGNNKVDFSEKLEFTVVMKNPLRAKVKLRI.

Cysteine 443 provides a ligand contact to heme.

The protein belongs to the cytochrome P450 family. Heme serves as cofactor.

This is Cytochrome P450 77A1 (CYP77A1) from Solanum melongena (Eggplant).